The chain runs to 433 residues: MIGGLFIYNHKGEVLISRVYRDDIGRNAVDAFRVNVIHARQQVRSPVTNIARTSFFHVKRSNIWLAAVTKQNVNAAMVFEFLYKMCDVMTAYFGKISEENIKNNFVLIYELLDEILDFGYPQNSETGALKTFITQQGIKSQTKEEQSQITSQVTGQIGWRREGIKYRRNELFLDVLESVNLLMSPQGQVLSAHVSGRVVMKSYLSGMPECKFGMNDKIVIEKQGKGTADETGKSGKQSIAIDDCTFHQCVRLSKFDSERSISFIPPDGEFELMRYRTTKDIILPFRVIPLVREVGRTKLEVKVVIKSNFKPSLLAQKIEVRIPTPLNTSGVQVICMKGKAKYKASENAIVWKIKRMAGMKESQISAEIELLPTNDKKKWARPPISMNFEVPFAPSGLKVRYLKVFEPKLNYSDHDVIKWVRYIGRSGIYETRC.

In terms of domain architecture, MHD spans 168–432; that stretch reads RNELFLDVLE…IGRSGIYETR (265 aa). A 1,2-diacyl-sn-glycero-3-phospho-(1D-myo-inositol-3,4,5-trisphosphate) contacts are provided by Lys-339, Lys-343, and Lys-352.

This sequence belongs to the adaptor complexes medium subunit family. As to quaternary structure, adaptor protein complex 2 (AP-2) is a heterotetramer composed of two large adaptins (alpha-type subunit and beta-type subunit), a medium adaptin (mu-type subunit) and a small adaptin (sigma-type subunit).

It localises to the cell membrane. The protein resides in the membrane. It is found in the coated pit. Functionally, component of the adaptor complexes which link clathrin to receptors in coated vesicles. Clathrin-associated protein complexes are believed to interact with the cytoplasmic tails of membrane proteins, leading to their selection and concentration. AP50 is a subunit of the plasma membrane adaptor. The complex binds polyphosphoinositide-containing lipids. The sequence is that of AP-2 complex subunit mu (AP2M1) from Gallus gallus (Chicken).